The sequence spans 170 residues: MGNETSLPMEMCSNFDADEIRRLGKRFRKLDLDNSGALSVDEFMSLPELQQNPLVQRVIDIFDADGNGEVDFKEFIQGVSQFSVKGDKLSKLRFAFRIYDMDNDGYISNGELFQVLKMMVGNNLKDTQLQQIVDKTIGFADKDEDGKISFDEFCSVVGNTDIHKKMVVDV.

4 EF-hand domains span residues 18–46, 50–85, 87–122, and 128–163; these read DEIRRLGKRFRKLDLDNSGALSVDEFMSL, QQNPLVQRVIDIFDADGNGEVDFKEFIQGVSQFSVK, DKLSKLRFAFRIYDMDNDGYISNGELFQVLKMMVGN, and QLQQIVDKTIGFADKDEDGKISFDEFCSVVGNTDIH. Positions 31, 33, 35, 42, 63, 65, 67, 69, 74, 100, 102, 104, 106, 111, 141, 143, 145, 147, and 152 each coordinate Ca(2+). Ser-35 bears the Phosphoserine mark.

The protein belongs to the calcineurin regulatory subunit family. Composed of a catalytic subunit (A) and a regulatory subunit (B). Interacts with sra.

Its function is as follows. Calcineurin is a calcium-binding and calmodulin-binding protein found in all cells from yeast to mammals, and a calcium-dependent, calmodulin-stimulated protein phosphatase. This is Calcineurin subunit B type 2 (CanB2) from Drosophila melanogaster (Fruit fly).